We begin with the raw amino-acid sequence, 143 residues long: Mannitol-specific phosphotransferase enzyme IIA component (143 aa).

The PTS EIIA type-2 domain occupies 1–142 (MKLLKNNIYI…DKVLEFLAKH (142 aa)). H61 (tele-phosphohistidine intermediate) is an active-site residue. H61 carries the post-translational modification Phosphohistidine; by HPr.

The protein localises to the cytoplasm. In terms of biological role, the phosphoenolpyruvate-dependent sugar phosphotransferase system (sugar PTS), a major carbohydrate active transport system, catalyzes the phosphorylation of incoming sugar substrates concomitantly with their translocation across the cell membrane. The enzyme II CmtAB PTS system is involved in D-mannitol transport. The chain is Mannitol-specific phosphotransferase enzyme IIA component (mtlF) from Mycoplasma pneumoniae (strain ATCC 29342 / M129 / Subtype 1) (Mycoplasmoides pneumoniae).